Here is an 862-residue protein sequence, read N- to C-terminus: Probable linoleate 9S-lipoxygenase 5 (862 aa).

Positions 36–161 (NDVNASLLDG…KYKSERIFFA (126 aa)) constitute a PLAT domain. The Lipoxygenase domain maps to 164 to 862 (AYLPGETPEP…GKGIPNSVSI (699 aa)). Residues histidine 523, histidine 528, histidine 714, asparagine 718, and isoleucine 862 each coordinate Fe cation.

The protein belongs to the lipoxygenase family. Monomer. The cofactor is Fe cation. As to expression, not detected in leaves, stems, flowers, roots, tubers and stolons during normal growth and development.

The protein resides in the cytoplasm. It catalyses the reaction (9Z,12Z)-octadecadienoate + O2 = (9S)-hydroperoxy-(10E,12Z)-octadecadienoate. Its pathway is lipid metabolism; oxylipin biosynthesis. Functionally, plant lipoxygenases may be involved in a number of diverse aspects of plant physiology including growth and development, pest resistance, and senescence or responses to wounding. May contribute to cell death during the hypersensitive response (HR) by the massive production of free fatty acid hydroperoxides. Catalyzes the hydroperoxidation of lipids containing a cis,cis-1,4-pentadiene structure. This Solanum tuberosum (Potato) protein is Probable linoleate 9S-lipoxygenase 5 (LOX1.5).